A 257-amino-acid polypeptide reads, in one-letter code: Ribonuclease HII (257 aa).

The region spanning 72-257 (ERVAGIDEVG…FSPVQKILQA (186 aa)) is the RNase H type-2 domain. Positions 78, 79, and 170 each coordinate a divalent metal cation.

Belongs to the RNase HII family. Mn(2+) serves as cofactor. It depends on Mg(2+) as a cofactor.

It is found in the cytoplasm. The catalysed reaction is Endonucleolytic cleavage to 5'-phosphomonoester.. In terms of biological role, endonuclease that specifically degrades the RNA of RNA-DNA hybrids. The polypeptide is Ribonuclease HII (Levilactobacillus brevis (strain ATCC 367 / BCRC 12310 / CIP 105137 / JCM 1170 / LMG 11437 / NCIMB 947 / NCTC 947) (Lactobacillus brevis)).